The chain runs to 538 residues: Frizzled-4 (538 aa).

An N-terminal signal peptide occupies residues 1 to 37; sequence MAWQGTGPSVRGMPGGVRLRLGLLLLQLLLLQRPALG. Residues 38–213 lie on the Extracellular side of the membrane; that stretch reads FGDEEERRCD…KCGYDAGLYS (176 aa). The FZ domain occupies 41-162; that stretch reads EEERRCDPIR…NDHNHMCMEG (122 aa). Cystine bridges form between cysteine 46/cysteine 107, cysteine 54/cysteine 100, cysteine 91/cysteine 129, cysteine 118/cysteine 159, cysteine 122/cysteine 146, cysteine 182/cysteine 201, cysteine 205/cysteine 283, and cysteine 303/cysteine 378. The N-linked (GlcNAc...) asparagine glycan is linked to asparagine 60. Asparagine 145 is a glycosylation site (N-linked (GlcNAc...) asparagine). A helical membrane pass occupies residues 214-244; sequence RSAKEFTDIWMAVWASLCFISTTFTVLTFLI. The Cytoplasmic portion of the chain corresponds to 245-250; sequence DSSRFS. A helical membrane pass occupies residues 251–276; sequence YPERPIIFLSMCYNIYSIAYIVRLTV. Residues 277 to 300 are Extracellular-facing; it reads GRERISCDFEEAAEPVLIQEGLKN. A helical transmembrane segment spans residues 301 to 334; that stretch reads TGCAIIFLLMYFFGMASSIWWVILTLTWFLAAGL. Residues 335–337 lie on the Cytoplasmic side of the membrane; it reads KWG. A helical transmembrane segment spans residues 338 to 366; it reads HEAIEMHSSYFHIAAWAIPAVKTIVILIM. At 367 to 384 the chain is on the extracellular side; the sequence is RLVDADELTGLCYVGNQS. An N-linked (GlcNAc...) asparagine glycan is attached at asparagine 382. Residues 385-419 form a helical membrane-spanning segment; sequence LDALTGFVVAPLFTYLVIGTLFIAAGLVALFKIRS. At 420-432 the chain is on the cytoplasmic side; sequence NLQKDGTKTDKLE. The chain crosses the membrane as a helical span at residues 433–461; that stretch reads RLMVKIGVFSVLYTVPATCVIACYFYEIS. The Extracellular portion of the chain corresponds to 462 to 474; it reads NWALFRYSADDSN. Residues 475 to 496 form a helical membrane-spanning segment; the sequence is MAVEMLKIFMSLLVGITSGMWI. Over 497–538 the chain is Cytoplasmic; sequence WSAKTLHTWQKCSNRLVNSGKVKREKRGNGWVKPGKGNETVV. A Lys-Thr-X-X-X-Trp motif, mediates interaction with the PDZ domain of Dvl family members motif is present at residues 500 to 505; the sequence is KTLHTW. The PDZ-binding motif lies at 536-538; it reads TVV.

The protein belongs to the G-protein coupled receptor Fz/Smo family. As to quaternary structure, interacts with MAGI3 and NDP. Component of a complex, at least composed of TSPAN12, FZD4 and norrin (NDP). Interacts (via FZ domain) with TSKU; TSKU competes with WNT2B for binding to FZD4, inhibiting Wnt signaling and repressing peripheral eye development. Interacts with glypican GPC3. In terms of processing, ubiquitinated by ZNRF3, leading to its degradation by the proteasome.

It is found in the cell membrane. Its function is as follows. Receptor for Wnt proteins. Most of frizzled receptors are coupled to the beta-catenin (CTNNB1) canonical signaling pathway, which leads to the activation of disheveled proteins, inhibition of GSK-3 kinase, nuclear accumulation of beta-catenin (CTNNB1) and activation of Wnt target genes. Plays a critical role in retinal vascularization by acting as a receptor for Wnt proteins and norrin (NDP). In retina, it can be both activated by Wnt protein-binding, but also by a Wnt-independent signaling via binding of norrin (NDP), promoting in both cases beta-catenin (CTNNB1) accumulation and stimulation of LEF/TCF-mediated transcriptional programs. A second signaling pathway involving PKC and calcium fluxes has been seen for some family members, but it is not yet clear if it represents a distinct pathway or if it can be integrated in the canonical pathway, as PKC seems to be required for Wnt-mediated inactivation of GSK-3 kinase. Both pathways seem to involve interactions with G-proteins. May be involved in transduction and intercellular transmission of polarity information during tissue morphogenesis and/or in differentiated tissues. This Rattus norvegicus (Rat) protein is Frizzled-4 (Fzd4).